The sequence spans 284 residues: MEPGMLGPHNLPHHEPISFGIDQILSGPETPGGGLGLGRGGQGHGENGAFSGGYHGASGYGPAGSLAPLPGSSGVGPGGVIRVPAHRPLPVPPPAGGAPAVPGPSGLGGAGGLAGLTFPWMDSGRRFAKDRLTAALSPFSGTRRIGHPYQNRTPPKRKKPRTSFSRSQVLELERRFLRQKYLASAERAALAKALRMTDAQVKTWFQNRRTKWRRQTAEEREAERHRAGRLLLHLQQDALPRPLRPPLPPDPLCLHNSSLFALQNLQPWAEDNKVASVSGLASVV.

3 disordered regions span residues 1–50 (MEPG…NGAF), 78–106 (GGVI…GPSG), and 139–166 (FSGT…SFSR). Residues 30 to 50 (TPGGGLGLGRGGQGHGENGAF) show a composition bias toward gly residues. A compositionally biased stretch (pro residues) spans 87–96 (RPLPVPPPAG). The segment at residues 157–216 (RKKPRTSFSRSQVLELERRFLRQKYLASAERAALAKALRMTDAQVKTWFQNRRTKWRRQT) is a DNA-binding region (homeobox).

The protein resides in the nucleus. Transcription activator that binds DNA elements with the consensus sequence 5'-CGGTAATTGG-3'. Binds DNA via its homeobox. Required for normal cell death of enteric neurons in the gastrointestinal tract. Required for normal development of the enteric nervous system, and for proper development of normal motility of the gastrointestinal tract. The polypeptide is T-cell leukemia homeobox protein 2 (TLX2) (Homo sapiens (Human)).